Reading from the N-terminus, the 123-residue chain is uncharacterized protein (123 aa).

2 helical membrane passes run 1–21 (MVLP…AVGC) and 103–123 (LESS…ILLF).

Its subcellular location is the membrane. This is an uncharacterized protein from Saccharomyces cerevisiae (strain ATCC 204508 / S288c) (Baker's yeast).